The sequence spans 240 residues: UDP-2,3-diacylglucosamine hydrolase (240 aa).

The Mn(2+) site is built by D8, H10, D41, N79, and H114. Residue 79–80 (NR) coordinates substrate. Substrate contacts are provided by D122, S160, N164, K167, and H195. The Mn(2+) site is built by H195 and H197.

It belongs to the LpxH family. Requires Mn(2+) as cofactor.

Its subcellular location is the cell inner membrane. The catalysed reaction is UDP-2-N,3-O-bis[(3R)-3-hydroxytetradecanoyl]-alpha-D-glucosamine + H2O = 2-N,3-O-bis[(3R)-3-hydroxytetradecanoyl]-alpha-D-glucosaminyl 1-phosphate + UMP + 2 H(+). It functions in the pathway glycolipid biosynthesis; lipid IV(A) biosynthesis; lipid IV(A) from (3R)-3-hydroxytetradecanoyl-[acyl-carrier-protein] and UDP-N-acetyl-alpha-D-glucosamine: step 4/6. Functionally, hydrolyzes the pyrophosphate bond of UDP-2,3-diacylglucosamine to yield 2,3-diacylglucosamine 1-phosphate (lipid X) and UMP by catalyzing the attack of water at the alpha-P atom. Involved in the biosynthesis of lipid A, a phosphorylated glycolipid that anchors the lipopolysaccharide to the outer membrane of the cell. The polypeptide is UDP-2,3-diacylglucosamine hydrolase (Yersinia pseudotuberculosis serotype O:1b (strain IP 31758)).